The sequence spans 177 residues: Large ribosomal subunit protein uL6 (177 aa).

Belongs to the universal ribosomal protein uL6 family. As to quaternary structure, part of the 50S ribosomal subunit.

In terms of biological role, this protein binds to the 23S rRNA, and is important in its secondary structure. It is located near the subunit interface in the base of the L7/L12 stalk, and near the tRNA binding site of the peptidyltransferase center. The polypeptide is Large ribosomal subunit protein uL6 (Thioalkalivibrio sulfidiphilus (strain HL-EbGR7)).